The primary structure comprises 1073 residues: Probable inorganic carbon transporter subunit DabA 2 (1073 aa).

Polar residues predominate over residues 1–20; sequence MSSGNTSSQNHSPVNNQPTR. Positions 1–35 are disordered; the sequence is MSSGNTSSQNHSPVNNQPTRLKSPLPALHKDTQPN. Positions 535, 537, 721, and 736 each coordinate Zn(2+).

It belongs to the inorganic carbon transporter (TC 9.A.2) DabA family. Forms a complex with DabB. It depends on Zn(2+) as a cofactor.

The protein localises to the cell inner membrane. In terms of biological role, part of an energy-coupled inorganic carbon pump. This Rhodopirellula baltica (strain DSM 10527 / NCIMB 13988 / SH1) protein is Probable inorganic carbon transporter subunit DabA 2.